A 297-amino-acid chain; its full sequence is Glucose-6-phosphate 1-epimerase (297 aa).

Residues arginine 57, glutamine 81, and arginine 86 each coordinate substrate. Residue serine 88 is modified to Phosphoserine. Histidine 159 is a catalytic residue. Residue aspartate 203 participates in substrate binding. Glutamate 264 is a catalytic residue.

The protein belongs to the glucose-6-phosphate 1-epimerase family.

It carries out the reaction alpha-D-glucose 6-phosphate = beta-D-glucose 6-phosphate. Catalyzes the interconversion between the alpha and beta anomers from at least three hexose 6-phosphate sugars (Glc6P, Gal6P, and Man6P). This is Glucose-6-phosphate 1-epimerase from Saccharomyces cerevisiae (strain ATCC 204508 / S288c) (Baker's yeast).